Consider the following 321-residue polypeptide: tRNA-5-methyluridine(54) 2-sulfurtransferase (321 aa).

Residues cysteine 3, cysteine 6, cysteine 22, and histidine 25 each contribute to the Zn(2+) site. ATP contacts are provided by residues 53-55 (AVS), aspartate 59, and isoleucine 79. [4Fe-4S] cluster-binding residues include cysteine 130 and cysteine 133. Lysine 137 participates in a covalent cross-link: Glycyl lysine isopeptide (Lys-Gly) (interchain with G-Cter in TtuB). ATP contacts are provided by glycine 156 and aspartate 161. Cysteine 222 is a binding site for [4Fe-4S] cluster. Glycyl lysine isopeptide (Lys-Gly) (interchain with G-Cter in TtuB) cross-links involve residues lysine 226 and lysine 229. Zn(2+) contacts are provided by cysteine 274, cysteine 277, cysteine 286, and cysteine 289.

The protein belongs to the TtcA family. TtuA subfamily. In terms of assembly, homodimer. Is able to form a heterocomplex with TtuB. [4Fe-4S] cluster serves as cofactor. The cofactor is Mg(2+). In terms of processing, conjugated to TtuB via covalent linkages involving Lys-137, Lys-226 and Lys-229.

It catalyses the reaction [TtuB sulfur-carrier protein]-C-terminal-Gly-aminoethanethioate + 5-methyluridine(54) in tRNA + ATP + H2O = [TtuB sulfur-carrier protein]-C-terminal Gly-Gly + 5-methyl-2-thiouridine(54) in tRNA + AMP + diphosphate + H(+). It participates in tRNA modification. With respect to regulation, enzymatic activity may be regulated by TtuB conjugation. Catalyzes the ATP-dependent 2-thiolation of 5-methyluridine residue at position 54 in the T loop of tRNAs, leading to 5-methyl-2-thiouridine (m(5)s(2)U or s(2)T). This modification allows thermal stabilization of tRNAs in thermophilic microorganisms, and is required for cell growth at high temperatures. TtuA transfers the S atom from the thiocarboxylated C-terminus of TtuB to tRNA. This chain is tRNA-5-methyluridine(54) 2-sulfurtransferase, found in Thermus thermophilus (strain ATCC BAA-163 / DSM 7039 / HB27).